The chain runs to 502 residues: Cytochrome P450 monooxygenase pyr9 (502 aa).

The helical transmembrane segment at 5–25 threads the bilayer; sequence EDASIGTVWVTCLLAVGLYFI. Residues N205, N291, and N372 are each glycosylated (N-linked (GlcNAc...) asparagine). C437 serves as a coordination point for heme.

The protein belongs to the cytochrome P450 family. Requires heme as cofactor.

It localises to the membrane. Its pathway is secondary metabolite biosynthesis; terpenoid biosynthesis. In terms of biological role, cytochrome P450 monooxygenase; part of the gene cluster that mediates the biosynthesis of pyripyropene A, a specific human acyl-coenzyme A:cholesterol acyltransferase 2 inhibitor. The first step of the pathway is the synthesis of nicotinyl-CoA from nicotinic acid by the nicotinic acid-CoA ligase pyr1. Nicotinyl-CoA is then a substrate of polyketide synthase pyr2 to produce 4-hydroxy-6-(3-pyridinyl)-2H-pyran-2-one (HPPO) which is further prenylated by the polyprenyl transferase pyr6 to yield farnesyl-HPPO. The next steps consist of an epoxidation of farnesyl-HPPO to epoxyfarnesyl-HPPO by FAD-dependent monooxygenase pyr5 and a cyclization of the terpenoid portion by the terpene cyclase pyr4 to yield deacetyl-pyripyropene E. The 2 cytochrome P450 monooxygenases pyr3 and pyr9, and the 2 acetyltransferases pyr7 and pyr8 are involved in the conversion of deacetyl-pyripyropene E into pyripyropene A through several cycles of oxidation and acetylation steps. Pyr7 acetylates deacetyl-pyripyropene E to pyripyropene E which is oxidized to 11-deacetyl-pyripyropene O by pyr3, which is in turn acetylated into pyripyropene O by pyr8. Pyripyropene O is then oxidized to deacetyl-pyripyropene A by pyr9. Deacetyl-pyripyropene A is finally acetylated to pyripyropene A by pyr8. This is Cytochrome P450 monooxygenase pyr9 from Aspergillus fumigatus (strain ATCC MYA-4609 / CBS 101355 / FGSC A1100 / Af293) (Neosartorya fumigata).